Reading from the N-terminus, the 61-residue chain is Photosystem II reaction center X protein (61 aa).

A helical membrane pass occupies residues 26 to 46 (IGSFIAAALLIVIPATAFLIF).

The protein belongs to the PsbX family. Type 2 subfamily. In terms of assembly, PSII consists of a core antenna complex that captures photons, and an electron transfer chain that converts photonic excitation into a charge separation. PSII forms dimeric complexes.

The protein localises to the cellular thylakoid membrane. Functionally, involved in the binding and/or turnover of quinones at the Q(B) site of Photosystem II. In Prochlorococcus marinus (strain MIT 9301), this protein is Photosystem II reaction center X protein.